The chain runs to 340 residues: UPF0284 protein Saci_0020 (340 aa).

Belongs to the UPF0284 family.

In Sulfolobus acidocaldarius (strain ATCC 33909 / DSM 639 / JCM 8929 / NBRC 15157 / NCIMB 11770), this protein is UPF0284 protein Saci_0020.